A 452-amino-acid polypeptide reads, in one-letter code: MLPCRSTGRRHALQHQPPQFKAHTGQRSTRSASIHRDRNNPDAHITSLEGQNPRPFGCSPPRSLQQQPAKPPQRGSLLDRDGIENITELWDRLQLLKQTLDHMPMADGLKPLKNFKSLQELLSLGGERLLGELAKQNIRVRQMMNEVAPLLHEDGSCTSLNYHLQPVIGVIYGPTGCGKSQLLRNLLSAQLVTPAPETVFFIVPQVDMIPPSEIKSWEMQICEGNYVPGPEGTIIPQSGTLCPKFVKLSYDDLTLDHNYDVSDPENIFAQAAARGPIAIIMDECMENLGSHKGVSKFFHAFPSKLHDKFPKCTGYTVFVVLHNMNPRRDLAGNIANLKIQSKLHIMSPRMHPTQLNRFINTYTKGLPLAISLLLKDIFNHHAQRCCYDWIIYNTNPEHEALQWSYLHPKDGLMPMYLNIQAHLYKILEHIHRVLNDRERWSRAYHVRKNKYQ.

Residues 1–78 are disordered; it reads MLPCRSTGRR…AKPPQRGSLL (78 aa). 173 to 180 serves as a coordination point for ATP; the sequence is GPTGCGKS. The tract at residues 442–452 is DNA-binding; sequence RAYHVRKNKYQ.

It belongs to the adenoviridae packaging protein 1 family. In terms of assembly, homodimer. Part of a genome packaging complex composed of packaging proteins 1, 2 and 3; this complex specifically binds to the packaging sequence on the left end of viral genomic DNA and performs packaging of the viral genome. Interacts with protein 33K.

The protein localises to the virion. The protein resides in the host nucleus. It localises to the host nucleoplasm. It is found in the host nucleolus. In terms of biological role, component of the packaging machinery which encapsidates the viral DNA into preformed capsids and transcriptional activator of the viral major late promoter (MLP). Binds, along with packaging proteins 2 and 3, to the specific packaging sequence on the left end of viral genomic DNA and displays ATPase activity thereby providing the power stroke of the packaging machinery. The activity of packaging protein IVa2 is stimulated by protein 33K which acts as a terminase. May be the protein that pumps DNA into the capsid powered by ATP hydrolysis. Specifically binds to the 5'-CG-3' nucleotides of the repeats making up the packaging sequence. Component of the DEF-A and DEF-B transcription factors that bind downstream elements of the major late promoter (MLP), and stimulate transcription from the MLP after initiation of viral DNA replication. DEF-A is a heterodimer packaging proteins 1 and 2 and DEF-B is a homodimer of packaging protein 1. The polypeptide is Packaging protein 1 (Homo sapiens (Human)).